A 305-amino-acid polypeptide reads, in one-letter code: 2-pyrone-4,6-dicarbaxylate hydrolase (305 aa).

Substrate is bound by residues 32–34, Tyr-50, Thr-78, Arg-125, Arg-131, Tyr-158, and His-182; that span reads HCH. Asp-258 serves as the catalytic Proton acceptor. Substrate is bound at residue Asn-263.

This sequence belongs to the metallo-dependent hydrolases superfamily. PDC hydrolase family.

The catalysed reaction is 2-oxo-2H-pyran-4,6-dicarboxylate + H2O = (1E)-4-oxobut-1-ene-1,2,4-tricarboxylate + H(+). With respect to regulation, strongly inhibited by 1 mM Zn(2+), Cu(2+), Mn(2+) and Co(2+) ions. Also inhibited by 5,5'-dithiobis(2-nitrobenzoic acid) (Ellman reagent) in vitro. Functionally, involved in the degradation of aromatic compounds via the protocatechuate 4,5-cleavage pathway. Catalyzes the hydrolysis of 2-pyrone-4,6-dicarboxylate (PDC) to oxalomesaconate (OMA). Also catalyzes the reverse reaction. This Comamonas testosteroni (Pseudomonas testosteroni) protein is 2-pyrone-4,6-dicarbaxylate hydrolase.